The chain runs to 509 residues: ATP synthase subunit beta (509 aa).

Residues 1–28 (MAKAATPKETAAAKKPAAPKKAASAKTA) form a disordered region. 187 to 194 (GGAGVGKT) lines the ATP pocket.

It belongs to the ATPase alpha/beta chains family. In terms of assembly, F-type ATPases have 2 components, CF(1) - the catalytic core - and CF(0) - the membrane proton channel. CF(1) has five subunits: alpha(3), beta(3), gamma(1), delta(1), epsilon(1). CF(0) has three main subunits: a(1), b(2) and c(9-12). The alpha and beta chains form an alternating ring which encloses part of the gamma chain. CF(1) is attached to CF(0) by a central stalk formed by the gamma and epsilon chains, while a peripheral stalk is formed by the delta and b chains.

It localises to the cell inner membrane. The enzyme catalyses ATP + H2O + 4 H(+)(in) = ADP + phosphate + 5 H(+)(out). Produces ATP from ADP in the presence of a proton gradient across the membrane. The catalytic sites are hosted primarily by the beta subunits. This chain is ATP synthase subunit beta, found in Sinorhizobium medicae (strain WSM419) (Ensifer medicae).